The primary structure comprises 943 residues: Isoleucine--tRNA ligase (943 aa).

Positions 58–68 (PYANGTIHIGH) match the 'HIGH' region motif. An L-isoleucyl-5'-AMP-binding site is contributed by Glu567. The 'KMSKS' region motif lies at 608-612 (KMSKS). Residue Lys611 participates in ATP binding. Cys906, Cys909, Cys926, and Cys929 together coordinate Zn(2+).

It belongs to the class-I aminoacyl-tRNA synthetase family. IleS type 1 subfamily. As to quaternary structure, monomer. Requires Zn(2+) as cofactor.

The protein localises to the cytoplasm. It catalyses the reaction tRNA(Ile) + L-isoleucine + ATP = L-isoleucyl-tRNA(Ile) + AMP + diphosphate. Catalyzes the attachment of isoleucine to tRNA(Ile). As IleRS can inadvertently accommodate and process structurally similar amino acids such as valine, to avoid such errors it has two additional distinct tRNA(Ile)-dependent editing activities. One activity is designated as 'pretransfer' editing and involves the hydrolysis of activated Val-AMP. The other activity is designated 'posttransfer' editing and involves deacylation of mischarged Val-tRNA(Ile). The chain is Isoleucine--tRNA ligase from Pseudomonas syringae pv. tomato (strain ATCC BAA-871 / DC3000).